The primary structure comprises 825 residues: MAAGKFASLPRHMPVNHQFPLASSMDLLSSKSPLAEHRTEAYPDVSIHGTLPRKKKGPPPIRSCDSASHMGTLPHSKSPRQSSPLTQDLILEKPLPDWKGDSFAFRDPYLLDPTLEYVKFSKERHIMDRTPERLKKELEEELLLSSEDLRSHAWYHGRIPRQVSENLVQRDGDFLVRDSLSSPGNFVLTCQWKNLAQHFKINRTVLRLSEAYSRVQYQFEMESFDSIPGLVRCYVGNRRPISQQSGAIIFQPINRTVPLWCLEERYGTSPGRGREGSFAEGRPDVVKRLSLTTGGIQARDHSLPRGNLLRNKDKSGSQPACLDHVQDRKAATLKAHQSESHLPIGCKLPPQSPSVDTSPCPNSPVFRTGSEPTLSPALVRRFSSDARAGEALRGSDSQLCPKPPPKPCKVPFLKVPPSPSPWLNSEANYCELNPAFAVGCDRGAKLLSQALDSHEMLLTAKQNGASGPRNSGINYSILDGDDQGRHWDPLAVQTDEGQEDETKFVPPVMETVSSFRPNDFESKLLPPENKPLETAMLKHAKELFTNHDARVIAQHMLSVDCKVARILEVSEDMKRSMGVSSGLELITLPHGRQLRLDIIERHNTMAIGIAVDILGCTGTLENRAGTLNKIIQVAMELKDTMGDLYSFSAIMKALEMPQITRLEKTWTALRHHYTQTAILYEKQLKPFSKILHEGRESTYVPASSVSVPLLMPLVTLMERQAVTFEGTDMWEKNDESCEIMLSHLATARFMAEASESYRMNAERVLADFQPDEEMTEILKTEFQMRLLWGSKGAEVNQNERYDKFNQILTALSRKLEPPSGKQAEL.

Ala2 is modified (N-acetylalanine). Ser32, Ser78, Ser83, Ser182, and Ser290 each carry phosphoserine. The segment at 40–84 is disordered; that stretch reads EAYPDVSIHGTLPRKKKGPPPIRSCDSASHMGTLPHSKSPRQSSP. The 100-residue stretch at 154 to 253 folds into the SH2 domain; that stretch reads WYHGRIPRQV…QSGAIIFQPI (100 aa). The interval 300 to 320 is disordered; sequence DHSLPRGNLLRNKDKSGSQPA. Lys334 bears the N6-methyllysine mark. Ser358, Ser363, and Ser375 each carry phosphoserine. Arg442 is modified (omega-N-methylarginine). A Phosphoserine modification is found at Ser471. A Ras-GEF domain is found at 548–818; sequence DARVIAQHML…TALSRKLEPP (271 aa). Residues 744–748 are mediates the interaction with BCAR1/p130CAS; it reads LATAR.

In terms of assembly, part of a complex comprised of PTPRA, BCAR1, BCAR3 and SRC; the formation of the complex is dependent on integrin mediated-tyrosine phosphorylation of PTPRA. Within the complex, interacts (via SH2 domain) with PTPRA (when phosphorylated on 'Tyr-792'). Interacts (via Ras-GEF domain) with BCAR1. Interacts (via Ras-GEF domain) with NEDD9. Interacts with PTK2/FAK1. Interacts with PTPN1. Interacts (via SH2 domain) with EGFR (when tyrosine-phosphorylated). Post-translationally, phosphorylated on tyrosine residues.

It localises to the cytoplasm. The protein resides in the cell junction. It is found in the focal adhesion. In terms of biological role, acts as an adapter protein downstream of several growth factor receptors to promote cell proliferation, migration, and redistribution of actin fibers. Specifically involved in INS/insulin signaling pathway by mediating MAPK1/ERK2-MAPK3/ERK1 activation and DNA synthesis. Promotes insulin-mediated membrane ruffling. In response to vasoconstrictor peptide EDN1, involved in the activation of RAP1 downstream of PTK2B via interaction with phosphorylated BCAR1. Inhibits cell migration and invasion via regulation of TGFB-mediated matrix digestion, actin filament rearrangement, and inhibition of invadopodia activity. May inhibit TGFB/SMAD signaling, via facilitating BCAR1 and SMAD2 and/or SMAD3 interaction. Regulates EGF-induced DNA synthesis. Required for the maintenance of ocular lens morphology and structural integrity, potentially via regulation of focal adhesion complex signaling. Acts upstream of PTPRA to regulate the localization of BCAR1 and PTPRA to focal adhesions, via regulation of SRC-mediated phosphorylation of PTPRA. Positively regulates integrin-induced tyrosine phosphorylation of BCAR1. Acts as a guanine nucleotide exchange factor (GEF) for small GTPases RALA, RAP1A and RRAS. However, in a contrasting study, lacks GEF activity towards RAP1. This is Breast cancer anti-estrogen resistance protein 3 homolog from Rattus norvegicus (Rat).